We begin with the raw amino-acid sequence, 607 residues long: UvrABC system protein C (607 aa).

The GIY-YIG domain maps to 15 to 93 (RKPGVYRMLD…IKELKPPYNI (79 aa)). The region spanning 203–238 (REVADQLSTDMEAAAAALEFEKAALLRDQLAAIQAV) is the UVR domain. Over residues 542–551 (HRARRGKARK) the composition is skewed to basic residues. Residues 542 to 561 (HRARRGKARKQSTLDEIPGI) form a disordered region.

It belongs to the UvrC family. In terms of assembly, interacts with UvrB in an incision complex.

It is found in the cytoplasm. Functionally, the UvrABC repair system catalyzes the recognition and processing of DNA lesions. UvrC both incises the 5' and 3' sides of the lesion. The N-terminal half is responsible for the 3' incision and the C-terminal half is responsible for the 5' incision. In Alcanivorax borkumensis (strain ATCC 700651 / DSM 11573 / NCIMB 13689 / SK2), this protein is UvrABC system protein C.